A 591-amino-acid chain; its full sequence is General transcription and DNA repair factor IIH subunit TFB1-1 (591 aa).

2 BSD domains span residues 112–166 (STSS…GKDS) and 191–243 (RTNR…YLYS).

This sequence belongs to the TFB1 family. As to quaternary structure, component of the 7-subunit TFIIH core complex composed of XPB, XPD, TFB1/GTF2H1, GTF2H2/P44, TFB4/GTF2H3, TFB2/GTF2H4 and TFB5/GTF2H5, which is active in NER. The core complex associates with the 3-subunit CDK-activating kinase (CAK) module composed of CYCH1/cyclin H1, CDKD and MAT1/At4g30820 to form the 10-subunit holoenzyme (holo-TFIIH) active in transcription.

It localises to the nucleus. Component of the general transcription and DNA repair factor IIH (TFIIH) core complex, which is involved in general and transcription-coupled nucleotide excision repair (NER) of damaged DNA and, when complexed to CAK, in RNA transcription by RNA polymerase II. In NER, TFIIH acts by opening DNA around the lesion to allow the excision of the damaged oligonucleotide and its replacement by a new DNA fragment. In transcription, TFIIH has an essential role in transcription initiation. When the pre-initiation complex (PIC) has been established, TFIIH is required for promoter opening and promoter escape. Phosphorylation of the C-terminal tail (CTD) of the largest subunit of RNA polymerase II by the kinase module CAK controls the initiation of transcription. This Arabidopsis thaliana (Mouse-ear cress) protein is General transcription and DNA repair factor IIH subunit TFB1-1.